The following is a 157-amino-acid chain: 2-C-methyl-D-erythritol 2,4-cyclodiphosphate synthase (157 aa).

Positions 8 and 10 each coordinate a divalent metal cation. 4-CDP-2-C-methyl-D-erythritol 2-phosphate-binding positions include 8–10 (DVH) and 34–35 (HS). Residue H42 coordinates a divalent metal cation. Residues 56–58 (DIG), 61–65 (FPDNE), 132–135 (TTTE), F139, and R142 contribute to the 4-CDP-2-C-methyl-D-erythritol 2-phosphate site.

This sequence belongs to the IspF family. As to quaternary structure, homotrimer. Requires a divalent metal cation as cofactor.

The catalysed reaction is 4-CDP-2-C-methyl-D-erythritol 2-phosphate = 2-C-methyl-D-erythritol 2,4-cyclic diphosphate + CMP. Its pathway is isoprenoid biosynthesis; isopentenyl diphosphate biosynthesis via DXP pathway; isopentenyl diphosphate from 1-deoxy-D-xylulose 5-phosphate: step 4/6. In terms of biological role, involved in the biosynthesis of isopentenyl diphosphate (IPP) and dimethylallyl diphosphate (DMAPP), two major building blocks of isoprenoid compounds. Catalyzes the conversion of 4-diphosphocytidyl-2-C-methyl-D-erythritol 2-phosphate (CDP-ME2P) to 2-C-methyl-D-erythritol 2,4-cyclodiphosphate (ME-CPP) with a corresponding release of cytidine 5-monophosphate (CMP). This chain is 2-C-methyl-D-erythritol 2,4-cyclodiphosphate synthase, found in Desulforamulus reducens (strain ATCC BAA-1160 / DSM 100696 / MI-1) (Desulfotomaculum reducens).